The primary structure comprises 282 residues: Pantothenate synthetase (282 aa).

ATP is bound at residue Met30–His37. The active-site Proton donor is His37. Gln60 is a binding site for (R)-pantoate. Beta-alanine is bound at residue Gln60. Residue Gly146–Asp149 participates in ATP binding. Gln152 provides a ligand contact to (R)-pantoate. Residues Ile175 and Lys183 to Arg186 each bind ATP.

The protein belongs to the pantothenate synthetase family. As to quaternary structure, homodimer.

The protein resides in the cytoplasm. It catalyses the reaction (R)-pantoate + beta-alanine + ATP = (R)-pantothenate + AMP + diphosphate + H(+). Its pathway is cofactor biosynthesis; (R)-pantothenate biosynthesis; (R)-pantothenate from (R)-pantoate and beta-alanine: step 1/1. Catalyzes the condensation of pantoate with beta-alanine in an ATP-dependent reaction via a pantoyl-adenylate intermediate. The protein is Pantothenate synthetase of Campylobacter jejuni subsp. jejuni serotype O:6 (strain 81116 / NCTC 11828).